A 517-amino-acid chain; its full sequence is ATP synthase subunit alpha 1 (517 aa).

174–181 (GDRQTGKT) contacts ATP.

It belongs to the ATPase alpha/beta chains family. As to quaternary structure, F-type ATPases have 2 components, CF(1) - the catalytic core - and CF(0) - the membrane proton channel. CF(1) has five subunits: alpha(3), beta(3), gamma(1), delta(1), epsilon(1). CF(0) has three main subunits: a(1), b(2) and c(9-12). The alpha and beta chains form an alternating ring which encloses part of the gamma chain. CF(1) is attached to CF(0) by a central stalk formed by the gamma and epsilon chains, while a peripheral stalk is formed by the delta and b chains.

Its subcellular location is the cell inner membrane. It carries out the reaction ATP + H2O + 4 H(+)(in) = ADP + phosphate + 5 H(+)(out). Produces ATP from ADP in the presence of a proton gradient across the membrane. The alpha chain is a regulatory subunit. This is ATP synthase subunit alpha 1 from Albidiferax ferrireducens (strain ATCC BAA-621 / DSM 15236 / T118) (Rhodoferax ferrireducens).